The chain runs to 178 residues: Large ribosomal subunit protein uL5 (178 aa).

This sequence belongs to the universal ribosomal protein uL5 family. In terms of assembly, part of the 50S ribosomal subunit; part of the 5S rRNA/L5/L18/L25 subcomplex. Contacts the 5S rRNA and the P site tRNA. Forms a bridge to the 30S subunit in the 70S ribosome.

This is one of the proteins that bind and probably mediate the attachment of the 5S RNA into the large ribosomal subunit, where it forms part of the central protuberance. In the 70S ribosome it contacts protein S13 of the 30S subunit (bridge B1b), connecting the 2 subunits; this bridge is implicated in subunit movement. Contacts the P site tRNA; the 5S rRNA and some of its associated proteins might help stabilize positioning of ribosome-bound tRNAs. This chain is Large ribosomal subunit protein uL5, found in Acinetobacter baylyi (strain ATCC 33305 / BD413 / ADP1).